The following is a 529-amino-acid chain: Serine/threonine-protein kinase RIO2 (529 aa).

The Protein kinase domain occupies 97-273; it reads VGNQIGIGKE…RDVTCVRTFF (177 aa). K123 lines the ATP pocket. The Proton acceptor role is filled by D228. 2 disordered regions span residues 331–366 and 411–452; these read RNRQ…KDHE and EGYK…GHVA. The span at 337–346 shows a compositional bias: acidic residues; sequence DLGEDEDDSD. Residues 411–428 are compositionally biased toward basic and acidic residues; sequence EGYKDIELPPEDFKRPAD. The segment covering 429 to 447 has biased composition (acidic residues); the sequence is SENDDENDEDEEEGEEEDA.

Belongs to the protein kinase superfamily. RIO-type Ser/Thr kinase family. It depends on Mg(2+) as a cofactor. In terms of tissue distribution, expressed in pharynx (metacorpus and posterior bulbus). Expression is restricted to adult stage.

The catalysed reaction is L-seryl-[protein] + ATP = O-phospho-L-seryl-[protein] + ADP + H(+). The enzyme catalyses L-threonyl-[protein] + ATP = O-phospho-L-threonyl-[protein] + ADP + H(+). Required for larval development. The protein is Serine/threonine-protein kinase RIO2 of Caenorhabditis elegans.